We begin with the raw amino-acid sequence, 172 residues long: Histone H1-like protein HC2 (172 aa).

Positions Met1–Lys77 are disordered. Residues Gln8–Lys77 show a composition bias toward basic residues.

This sequence belongs to the histone H1/H5 family. HCT subfamily.

Its function is as follows. Might have a role in establishing the nucleoid structure of elementary bodies. The sequence is that of Histone H1-like protein HC2 (hctB) from Chlamydia pneumoniae (Chlamydophila pneumoniae).